Here is a 183-residue protein sequence, read N- to C-terminus: Ferritin heavy chain (183 aa).

N-acetylmethionine is present on Met-1. N-acetylthreonine; in Ferritin heavy chain, N-terminally processed is present on Thr-2. Positions 11 to 160 constitute a Ferritin-like diiron domain; that stretch reads QNYHQDSEAA…DHVTNLRKMG (150 aa). Positions 28, 63, 66, 108, and 142 each coordinate Fe cation. Ser-179 and Ser-183 each carry phosphoserine.

The protein belongs to the ferritin family. In terms of assembly, oligomer of 24 subunits. There are two types of subunits: L (light) chain and H (heavy) chain. The major chain can be light or heavy, depending on the species and tissue type. The functional molecule forms a roughly spherical shell with a diameter of 12 nm and contains a central cavity into which the insoluble mineral iron core is deposited. Interacts with NCOA4; NCOA4 promotes targeting of the iron-binding ferritin complex to autolysosomes following starvation or iron depletion.

It is found in the cytoplasm. The protein resides in the lysosome. It localises to the cytoplasmic vesicle. The protein localises to the autophagosome. It carries out the reaction 4 Fe(2+) + O2 + 4 H(+) = 4 Fe(3+) + 2 H2O. Its function is as follows. Stores iron in a soluble, non-toxic, readily available form. Important for iron homeostasis. Has ferroxidase activity. Iron is taken up in the ferrous form and deposited as ferric hydroxides after oxidation. Also plays a role in delivery of iron to cells. Mediates iron uptake in capsule cells of the developing kidney. Delivery to lysosomes is mediated by the cargo receptor NCOA4 for autophagic degradation and release of iron. In Pongo abelii (Sumatran orangutan), this protein is Ferritin heavy chain (FTH1).